The chain runs to 434 residues: DNA primase large subunit PriL (434 aa).

[4Fe-4S] cluster contacts are provided by Cys-281, Cys-392, Cys-403, and Cys-409.

It belongs to the eukaryotic-type primase large subunit family. In terms of assembly, heterodimer of a small subunit (PriS) and a large subunit (PriL). It depends on [4Fe-4S] cluster as a cofactor.

Its function is as follows. Regulatory subunit of DNA primase, an RNA polymerase that catalyzes the synthesis of short RNA molecules used as primers for DNA polymerase during DNA replication. Stabilizes and modulates the activity of the small subunit, increasing the rate of DNA synthesis, and conferring RNA synthesis capability. The DNA polymerase activity may enable DNA primase to also catalyze primer extension after primer synthesis. May also play a role in DNA repair. This chain is DNA primase large subunit PriL, found in Methanothermobacter thermautotrophicus (strain ATCC 29096 / DSM 1053 / JCM 10044 / NBRC 100330 / Delta H) (Methanobacterium thermoautotrophicum).